Here is a 366-residue protein sequence, read N- to C-terminus: Growth/differentiation factor 3 (366 aa).

An N-terminal signal peptide occupies residues 1–22 (MQPYQRLLALGFLLLTLPWGQT). Residues 23 to 252 (SEFQDSDLLQ…HCHPSSRKRR (230 aa)) constitute a propeptide that is removed on maturation. N-linked (GlcNAc...) asparagine glycans are attached at residues Asn-113 and Asn-308. 3 cysteine pairs are disulfide-bonded: Cys-266–Cys-331, Cys-295–Cys-363, and Cys-299–Cys-365.

Belongs to the TGF-beta family. Homodimer. Heterodimer (Potential). But, in contrast to other members of this family, cannot be disulfide-linked. Synthesized as large precursor molecule that undergo proteolytic cleavage, releasing the pro-domain from the active, receptor binding, C-terminal region of the molecule. In terms of tissue distribution, primarily in adult bone marrow, spleen, thymus and adipose tissue.

The protein localises to the secreted. The protein resides in the cytoplasm. Functionally, growth factor involved in early embryonic development and adipose-tissue homeostasis. During embryogenesis controls formation of anterior visceral endoderm and mesoderm and the establishment of anterior-posterior identity through a receptor complex comprising the receptor ACVR1B and the coreceptor CRIPTO. Regulates adipose-tissue homeostasis and energy balance under nutrient overload in part by signaling through the receptor complex based on ACVR1C and CRIPTO. The chain is Growth/differentiation factor 3 (Gdf3) from Mus musculus (Mouse).